The chain runs to 492 residues: Regulatory protein ViaA (492 aa).

Belongs to the ViaA family. As to quaternary structure, homodimer. Interacts with RavA.

Its subcellular location is the cytoplasm. Component of the RavA-ViaA chaperone complex, which may act on the membrane to optimize the function of some of the respiratory chains. ViaA stimulates the ATPase activity of RavA. The sequence is that of Regulatory protein ViaA from Pectobacterium carotovorum subsp. carotovorum (strain PC1).